The primary structure comprises 217 residues: MKVFEFLKGKRGAMGIGTLIIFIAMVLVAAVAAAVLINTSGFLQQKAMATGKESTEQVASGLMCIGVTGHYDKTLGGIDKLAIYITPNAGSAPIDLKNAKLFLIYDGESHVLNYSTVTTATLGADDIFNSSAITDWSLADSSSYVVGVIQDADGSLSNGVINKGDIAVLLVNANAVFNKAIPTRSEVSGQFQPEFGAPAVIQFTTPAAYTQTVIELQ.

The propeptide occupies 1-12; the sequence is MKVFEFLKGKRG.

The protein belongs to the archaeal flagellin family.

It localises to the archaeal flagellum. Functionally, flagellin is the subunit protein which polymerizes to form the filaments of archaeal flagella. In Methanocaldococcus jannaschii (strain ATCC 43067 / DSM 2661 / JAL-1 / JCM 10045 / NBRC 100440) (Methanococcus jannaschii), this protein is Flagellin B1 (flaB1).